A 669-amino-acid chain; its full sequence is Probable potassium transport system protein Kup (669 aa).

12 helical membrane-spanning segments follow: residues 47–67 (VLMLALGALGVVFGDIGTSPL), 86–106 (VIGILSLIFWTLVLAICIKYM), 144–164 (TIIGLFGAALLYGDGIITPAI), 172–192 (GLTLVAPQFSPYIIPLTIFVM), 206–226 (IGVIFGPILLIWFTVLGLLGI), 252–272 (GMAGFLVLGSVFLVVTGGEAL), 288–308 (WFFVALPALVLNYFGQGALLL), 326–346 (ALLPMVMLSTMATVIASQALI), 378–398 (IYIPIVNWSMFIGVIWLVLTF), 404–424 (LAAAYGIAVTGATMITTILAF), 435–455 (LLKSSAIFGSFLVMDLAFFGA), and 460–480 (IPHGGWVPLVIGAIIYLLMTT).

It belongs to the HAK/KUP transporter (TC 2.A.72) family.

The protein resides in the cell inner membrane. It carries out the reaction K(+)(in) + H(+)(in) = K(+)(out) + H(+)(out). Transport of potassium into the cell. Likely operates as a K(+):H(+) symporter. The sequence is that of Probable potassium transport system protein Kup from Bdellovibrio bacteriovorus (strain ATCC 15356 / DSM 50701 / NCIMB 9529 / HD100).